The following is a 165-amino-acid chain: HTH-type transcriptional regulator MmpR5 (165 aa).

The region spanning 1-151 (MSVNDGVDQM…LLAYMENVVS (151 aa)) is the HTH marR-type domain. Residues 53–76 (SEELATALAASSGGISTNARMLIQ) constitute a DNA-binding region (H-T-H motif).

Homodimer.

Its function is as follows. Controls the expression level of the Mmps2-MmpL2, MmpS4-MmpL4, and MmpS5-MmpL5 transport systems. Also controls its own expression. Acts by binding directly to the promoter regions. The chain is HTH-type transcriptional regulator MmpR5 from Mycobacterium tuberculosis (strain ATCC 25618 / H37Rv).